Here is a 177-residue protein sequence, read N- to C-terminus: Calcium-binding protein CML38 (177 aa).

The segment covering 1 to 11 (MKNNTQPQSSF) has biased composition (polar residues). Residues 1-44 (MKNNTQPQSSFKKLCRKLSPKREDSAGEIQQHNSSNGEDKNREL) are disordered. 4 consecutive EF-hand domains span residues 39 to 74 (DKNR…LGEQ), 75 to 110 (LSDE…DDEE), 111 to 146 (EKKM…LGES), and 147 to 177 (RTTD…LMMR). Ca(2+)-binding residues include D52, N54, D56, R58, E63, D88, D90, D92, M94, and E99. Ca(2+)-binding residues include D160, N162, D164, and E171.

Binds to ABCG36. Expressed in cotyledons and guard cells of young leaves. In mature root, expressed in the epidermis, trichoblasts, young lateral root and root tip. Expressed from stage 9 to 15 of flower development in anther wall.

Its function is as follows. Potential calcium sensor that binds calcium in vitro. The sequence is that of Calcium-binding protein CML38 from Arabidopsis thaliana (Mouse-ear cress).